Consider the following 484-residue polypeptide: Sperm motility kinase 1 (484 aa).

Positions 8-256 (YEMLETIGQG…VAEVMVHPWI (249 aa)) constitute a Protein kinase domain. ATP-binding positions include 14-22 (IGQGGCAKV) and lysine 37. Aspartate 127 acts as the Proton acceptor in catalysis. Residues 274 to 314 (KPDPAIVKPMGHIGFQAQDIEDSLRQRKFNETMASYCLLKK) enclose the UBA domain. Residues 423–434 (IDESTEGHTSAS) are compositionally biased toward polar residues. The disordered stretch occupies residues 423 to 447 (IDESTEGHTSASAEDKPVHSRGWPR).

This sequence belongs to the protein kinase superfamily. Tyr protein kinase family. Smok subfamily. Testis-specific. Expressed in the testis from 22 days postpartum (22 dpp).

The enzyme catalyses L-seryl-[protein] + ATP = O-phospho-L-seryl-[protein] + ADP + H(+). It carries out the reaction L-threonyl-[protein] + ATP = O-phospho-L-threonyl-[protein] + ADP + H(+). Its function is as follows. May play a role in sperm motility, especially in the regulation of flagellar function. The sequence is that of Sperm motility kinase 1 (Smok1) from Mus musculus (Mouse).